We begin with the raw amino-acid sequence, 281 residues long: NADPH-dependent 7-cyano-7-deazaguanine reductase (281 aa).

81–83 (VES) lines the substrate pocket. An NADPH-binding site is contributed by 83-84 (SK). Cys188 serves as the catalytic Thioimide intermediate. Asp195 (proton donor) is an active-site residue. Residue 227-228 (HE) coordinates substrate. NADPH is bound at residue 256-257 (RG).

Belongs to the GTP cyclohydrolase I family. QueF type 2 subfamily. As to quaternary structure, homodimer.

It localises to the cytoplasm. The catalysed reaction is 7-aminomethyl-7-carbaguanine + 2 NADP(+) = 7-cyano-7-deazaguanine + 2 NADPH + 3 H(+). It functions in the pathway tRNA modification; tRNA-queuosine biosynthesis. In terms of biological role, catalyzes the NADPH-dependent reduction of 7-cyano-7-deazaguanine (preQ0) to 7-aminomethyl-7-deazaguanine (preQ1). This chain is NADPH-dependent 7-cyano-7-deazaguanine reductase, found in Acidovorax ebreus (strain TPSY) (Diaphorobacter sp. (strain TPSY)).